The primary structure comprises 466 residues: Uronate isomerase (466 aa).

This sequence belongs to the metallo-dependent hydrolases superfamily. Uronate isomerase family.

The enzyme catalyses D-glucuronate = D-fructuronate. It catalyses the reaction aldehydo-D-galacturonate = keto-D-tagaturonate. It functions in the pathway carbohydrate metabolism; pentose and glucuronate interconversion. The sequence is that of Uronate isomerase from Streptococcus agalactiae serotype V (strain ATCC BAA-611 / 2603 V/R).